Here is a 371-residue protein sequence, read N- to C-terminus: SufE-like protein 1, chloroplastic/mitochondrial (371 aa).

A chloroplast and mitochondrion-targeting transit peptide spans 1–66; it reads MAAAMSSSCC…ISTGIVPPPS (66 aa). The Cysteine persulfide intermediate role is filled by C131. Position 131 is an S-glutathionyl cysteine (C131). A disordered region spans residues 218-249; it reads VKGEEDSSSGESSESSFVSIPETKDEANVPEV.

Belongs to the SufE family. Heterotetramer with NFS2. Interacts with NFS2 and NIFS1. Interacts in vitro with GRXS14, GRXS15, GRXS16 and GRXS17, but not with GRXC5. Interacts in vivo only with GRXS14 and GRXS16. Glutathionylated. Glutathionylation strongly reduces the stimulation of NFS2 activity. In terms of tissue distribution, expressed in roots, leaves, stems and flowers.

It is found in the plastid. It localises to the chloroplast stroma. The protein localises to the mitochondrion. It functions in the pathway cofactor biosynthesis; iron-sulfur cluster biosynthesis. Functionally, participates in cysteine desulfurization mediated by NFS2 in chloroplast and NIFS1 in mitochondrion. Activates the cysteine desulfurase activity of NFS2. Cysteine desulfurization mobilizes sulfur from L-cysteine to yield L-alanine and supplies the inorganic sulfur for iron-sulfur (Fe-S) cluster formation. Glutaredoxins regulate SUFE1 activity by inducing its reduction and deglutathionylation. This chain is SufE-like protein 1, chloroplastic/mitochondrial, found in Arabidopsis thaliana (Mouse-ear cress).